Reading from the N-terminus, the 288-residue chain is ATP synthase gamma chain (288 aa).

It belongs to the ATPase gamma chain family. In terms of assembly, F-type ATPases have 2 components, CF(1) - the catalytic core - and CF(0) - the membrane proton channel. CF(1) has five subunits: alpha(3), beta(3), gamma(1), delta(1), epsilon(1). CF(0) has three main subunits: a, b and c.

It is found in the cell inner membrane. In terms of biological role, produces ATP from ADP in the presence of a proton gradient across the membrane. The gamma chain is believed to be important in regulating ATPase activity and the flow of protons through the CF(0) complex. This chain is ATP synthase gamma chain, found in Legionella pneumophila (strain Paris).